Consider the following 158-residue polypeptide: Transcriptional regulator MraZ (158 aa).

2 SpoVT-AbrB domains span residues 7-57 and 86-129; these read THQN…PTAA and AYPV…EPAA. The tract at residues 133–158 is disordered; it reads RRAEARTRSRQLALPAQGRRQGGADA.

This sequence belongs to the MraZ family. Forms oligomers.

The protein localises to the cytoplasm. The protein resides in the nucleoid. The sequence is that of Transcriptional regulator MraZ from Gluconacetobacter diazotrophicus (strain ATCC 49037 / DSM 5601 / CCUG 37298 / CIP 103539 / LMG 7603 / PAl5).